A 199-amino-acid polypeptide reads, in one-letter code: Inner membrane-spanning protein YciB (199 aa).

Helical transmembrane passes span 7–27, 32–52, 56–76, 93–113, 126–146, and 153–173; these read HPLFKLATELGPLLVFFAANA, FVATAAFMVAIVAAMIASYVV, IPLMALVTGIVVIVFGTLTLV, LFAGVLGGGLLFGRSFIAIMF, VLTLRWALFFFGMAILNELIW, and FWVNFKVFGAVPLTMIFAMMQ.

This sequence belongs to the YciB family.

The protein localises to the cell inner membrane. Its function is as follows. Plays a role in cell envelope biogenesis, maintenance of cell envelope integrity and membrane homeostasis. The sequence is that of Inner membrane-spanning protein YciB from Nitrobacter hamburgensis (strain DSM 10229 / NCIMB 13809 / X14).